The chain runs to 377 residues: RNA polymerase sigma factor SigA (377 aa).

Residues 72–92 are disordered; sequence EVSNLRQGEDHDGNDNDDFNF. The segment at 144–214 is sigma-70 factor domain-2; the sequence is LAEANLRLVV…TRAIADQART (71 aa). The Interaction with polymerase core subunit RpoC motif lies at 168-171; sequence DLIQ. Residues 223-299 are sigma-70 factor domain-3; that stretch reads ETINKLIRVS…DQEALTPADA (77 aa). The segment at 312 to 365 is sigma-70 factor domain-4; the sequence is VLDTLTEREENVLRLRFGLDDGRTRTLEEVGKVFGVTRERIRQIEAKALRKLRH. Residues 338–357 constitute a DNA-binding region (H-T-H motif); the sequence is LEEVGKVFGVTRERIRQIEA.

Belongs to the sigma-70 factor family. RpoD/SigA subfamily. In terms of assembly, interacts transiently with the RNA polymerase catalytic core.

Its subcellular location is the cytoplasm. Sigma factors are initiation factors that promote the attachment of RNA polymerase to specific initiation sites and are then released. This sigma factor is the primary sigma factor during exponential growth. The polypeptide is RNA polymerase sigma factor SigA (Bacillus sp).